Consider the following 373-residue polypeptide: Glutamate 5-kinase (373 aa).

Lysine 16 contacts ATP. Positions 56, 143, and 155 each coordinate substrate. 175–176 serves as a coordination point for ATP; the sequence is TD. The PUA domain occupies 281–359; the sequence is RGRLTLDDGA…SRIDSLLGYK (79 aa).

The protein belongs to the glutamate 5-kinase family.

The protein localises to the cytoplasm. The enzyme catalyses L-glutamate + ATP = L-glutamyl 5-phosphate + ADP. Its pathway is amino-acid biosynthesis; L-proline biosynthesis; L-glutamate 5-semialdehyde from L-glutamate: step 1/2. In terms of biological role, catalyzes the transfer of a phosphate group to glutamate to form L-glutamate 5-phosphate. The protein is Glutamate 5-kinase of Saccharophagus degradans (strain 2-40 / ATCC 43961 / DSM 17024).